We begin with the raw amino-acid sequence, 122 residues long: Large ribosomal subunit protein uL14 (122 aa).

It belongs to the universal ribosomal protein uL14 family. In terms of assembly, part of the 50S ribosomal subunit. Forms a cluster with proteins L3 and L19. In the 70S ribosome, L14 and L19 interact and together make contacts with the 16S rRNA in bridges B5 and B8.

Its function is as follows. Binds to 23S rRNA. Forms part of two intersubunit bridges in the 70S ribosome. The polypeptide is Large ribosomal subunit protein uL14 (Desulforapulum autotrophicum (strain ATCC 43914 / DSM 3382 / VKM B-1955 / HRM2) (Desulfobacterium autotrophicum)).